We begin with the raw amino-acid sequence, 289 residues long: MKLLVKAPAKINLSLDVLGKRQDGYHEVKMIMTTIDLADRLELMELAEDRIEILSHNRYVPDDQRNLAYQAAKLLKEKFNVKKGVSITIEKTIPVAAGLAGGSSDAAATLRGLNKLWNLGLTIDQLAELGAEIGSDVSFCVYGGTAIATGRGEQIEHIKTPPSCWVILAKPHIGVFTADVYGNLKLNRVTHPNVDKMVDVINAGDYKGICDTVGNVLEDVTFAMHPEVARIKAQMKRFGADAVLMSGSGPTVFGLVHHDSRMHRIYNGLKGFCEQVYAVRLLGERETLE.

Lysine 10 is a catalytic residue. 94-104 (PVAAGLAGGSS) is an ATP binding site. Residue aspartate 136 is part of the active site.

Belongs to the GHMP kinase family. IspE subfamily.

It carries out the reaction 4-CDP-2-C-methyl-D-erythritol + ATP = 4-CDP-2-C-methyl-D-erythritol 2-phosphate + ADP + H(+). It functions in the pathway isoprenoid biosynthesis; isopentenyl diphosphate biosynthesis via DXP pathway; isopentenyl diphosphate from 1-deoxy-D-xylulose 5-phosphate: step 3/6. Functionally, catalyzes the phosphorylation of the position 2 hydroxy group of 4-diphosphocytidyl-2C-methyl-D-erythritol. The polypeptide is 4-diphosphocytidyl-2-C-methyl-D-erythritol kinase (Bacillus anthracis).